The sequence spans 236 residues: Ribitol-5-phosphate cytidylyltransferase (236 aa).

CTP is bound by residues 7 to 10 and 80 to 86; these read LAGG and GTDRNET.

Belongs to the IspD/TarI cytidylyltransferase family. TarI subfamily.

The catalysed reaction is D-ribitol 5-phosphate + CTP + H(+) = CDP-L-ribitol + diphosphate. It participates in cell wall biogenesis; poly(ribitol phosphate) teichoic acid biosynthesis. In terms of biological role, catalyzes the transfer of the cytidylyl group of CTP to D-ribitol 5-phosphate. This Listeria monocytogenes serovar 1/2a (strain ATCC BAA-679 / EGD-e) protein is Ribitol-5-phosphate cytidylyltransferase.